A 409-amino-acid polypeptide reads, in one-letter code: NADH-quinone oxidoreductase subunit D (409 aa).

The protein belongs to the complex I 49 kDa subunit family. NDH-1 is composed of 14 different subunits. Subunits NuoB, C, D, E, F, and G constitute the peripheral sector of the complex.

Its subcellular location is the cell inner membrane. It carries out the reaction a quinone + NADH + 5 H(+)(in) = a quinol + NAD(+) + 4 H(+)(out). Its function is as follows. NDH-1 shuttles electrons from NADH, via FMN and iron-sulfur (Fe-S) centers, to quinones in the respiratory chain. The immediate electron acceptor for the enzyme in this species is believed to be ubiquinone. Couples the redox reaction to proton translocation (for every two electrons transferred, four hydrogen ions are translocated across the cytoplasmic membrane), and thus conserves the redox energy in a proton gradient. This chain is NADH-quinone oxidoreductase subunit D, found in Helicobacter pylori (strain P12).